The chain runs to 357 residues: Cinnamyl alcohol dehydrogenase 7 (357 aa).

Cys46 contributes to the Zn(2+) binding site. Thr48 provides a ligand contact to NADP(+). Zn(2+) contacts are provided by His68, Glu69, Cys99, Cys102, Cys105, Cys113, and Cys162. Residues Thr166, 187–192 (GLGGLG), 210–215 (STSERK), Thr250, Gly274, and 297–299 (SMV) each bind NADP(+).

It belongs to the zinc-containing alcohol dehydrogenase family. In terms of assembly, homodimer. The cofactor is Zn(2+). Expressed in the differentiation and elongation zones of primary and lateral roots. Expressed in the hypocotyl, cotyledon and leaf veins, hydathodes and trichomes. In stems, expressed in the vascular cambium region. Expressed in the style, anthers, stamen filaments, vascular tissues of sepals and stigmatic regions in flowers, and abscission, style and stigmatic regions of siliques and seed testa.

It catalyses the reaction (E)-cinnamyl alcohol + NADP(+) = (E)-cinnamaldehyde + NADPH + H(+). The protein operates within aromatic compound metabolism; phenylpropanoid biosynthesis. In terms of biological role, involved in lignin biosynthesis. Catalyzes the final step specific for the production of lignin monomers. Catalyzes the NADPH-dependent reduction of coniferaldehyde, 5-hydroxyconiferaldehyde, sinapaldehyde, 4-coumaraldehyde and caffeyl aldehyde to their respective alcohols. The sequence is that of Cinnamyl alcohol dehydrogenase 7 (CAD7) from Arabidopsis thaliana (Mouse-ear cress).